The sequence spans 1498 residues: Golgin subfamily A member 3 (1498 aa).

M1 bears the N-acetylmethionine mark. The interval 1 to 118 (MDGASAEQDG…GTSAEGSVRK (118 aa)) is disordered. S18 is subject to Phosphoserine. A compositionally biased stretch (pro residues) spans 27 to 36 (PLKPPGPLVP). Residue S57 is modified to Phosphoserine. Positions 71–81 (PTPPFPDPPSS) are enriched in pro residues. An interaction with GOPC region spans residues 121-141 (LQSLRLSLPMQETQLCSTDSP). 2 disordered regions span residues 166–195 (RVKR…MLNP) and 216–325 (SVPR…SAST). The interval 172–257 (ERSSQPATKT…DYRTEDSNAG (86 aa)) is golgi-targeting domain. Composition is skewed to polar residues over residues 173-184 (RSSQPATKTRLF) and 269-291 (TKGS…SLSP). The residue at position 272 (S272) is a Phosphoserine. Residues 315 to 324 (SDSSSYSSAS) are compositionally biased toward low complexity. Phosphoserine is present on residues S385, S389, and S465. Residues 394–1459 (VSLESSAAET…ALTVHESLSS (1066 aa)) are a coiled coil. Basic and acidic residues predominate over residues 789–801 (KEELDRGARRLEE). 4 disordered regions span residues 789–809 (KEEL…TSET), 974–993 (QKQK…KEMK), 1376–1400 (RGAA…PIKI), and 1440–1498 (DSLQ…GPGE). At S983 the chain carries Phosphoserine. Basic and acidic residues predominate over residues 1376-1387 (RGAAKTRKEPKG). Phosphoserine is present on S1392. A compositionally biased stretch (basic and acidic residues) spans 1440–1452 (DSLQRQMEEHALT).

In terms of assembly, homodimer. Interacts with GOLGA7. Isoform 1 interacts with GOPC while isoform 3 does not. Post-translationally, cleaved by caspases in apoptotic cells. Expressed in all tissues tested. Expressed in liver, testis, lung, heart, salivary gland and kidney.

It is found in the cytoplasm. It localises to the golgi apparatus. The protein resides in the golgi stack membrane. In terms of biological role, golgi auto-antigen; probably involved in maintaining Golgi structure. This Homo sapiens (Human) protein is Golgin subfamily A member 3 (GOLGA3).